Reading from the N-terminus, the 184-residue chain is MSIEWYAVHTLVGQEEKAKANLEKRIKAFGLQDKIFQVLIPTEEVVELREGGKKEVVRKKLFPGYLFIQMDLGDEEEPNEAWEVVRGTPGITGFVGAGMRPVPLSPDEVRHILEVSGLLGKKEAPKAQVAFREGDQVRVVSGPFADFTGTVTEINPERGKVKVMVTIFGRETPVELDFSQVVKA.

One can recognise a KOW domain in the interval Glu133–Val163.

It belongs to the NusG family.

In terms of biological role, participates in transcription elongation, termination and antitermination. In Thermus thermophilus (strain ATCC 27634 / DSM 579 / HB8), this protein is Transcription termination/antitermination protein NusG.